We begin with the raw amino-acid sequence, 471 residues long: Alkaline phosphatase (471 aa).

The signal sequence occupies residues 1-21 (MKQSTIALALLPLLFTPVTKA). D73 provides a ligand contact to Mg(2+). D73 lines the Zn(2+) pocket. The Phosphoserine intermediate role is filled by S124. Residues D175 and T177 each coordinate Mg(2+). 2 disulfide bridges follow: C190-C200 and C308-C358. E344 is a binding site for Mg(2+). Positions 349, 353, 391, 392, and 434 each coordinate Zn(2+).

It belongs to the alkaline phosphatase family. Isozymes 1 and 3 are a dimer of identical chains, isozyme 2 is a dimer of heterogeneous chains, one of each of the subunits from isozymes 1 and 3. Mg(2+) serves as cofactor. It depends on Zn(2+) as a cofactor.

It is found in the periplasm. The catalysed reaction is a phosphate monoester + H2O = an alcohol + phosphate. This is Alkaline phosphatase (phoA) from Escherichia coli (strain K12).